The following is a 569-amino-acid chain: 2-succinyl-5-enolpyruvyl-6-hydroxy-3-cyclohexene-1-carboxylate synthase (569 aa).

The protein belongs to the TPP enzyme family. MenD subfamily. Homodimer. Mg(2+) is required as a cofactor. Requires Mn(2+) as cofactor. Thiamine diphosphate serves as cofactor.

It catalyses the reaction isochorismate + 2-oxoglutarate + H(+) = 5-enolpyruvoyl-6-hydroxy-2-succinyl-cyclohex-3-ene-1-carboxylate + CO2. It functions in the pathway quinol/quinone metabolism; 1,4-dihydroxy-2-naphthoate biosynthesis; 1,4-dihydroxy-2-naphthoate from chorismate: step 2/7. The protein operates within quinol/quinone metabolism; menaquinone biosynthesis. Functionally, catalyzes the thiamine diphosphate-dependent decarboxylation of 2-oxoglutarate and the subsequent addition of the resulting succinic semialdehyde-thiamine pyrophosphate anion to isochorismate to yield 2-succinyl-5-enolpyruvyl-6-hydroxy-3-cyclohexene-1-carboxylate (SEPHCHC). In Haemophilus ducreyi (strain 35000HP / ATCC 700724), this protein is 2-succinyl-5-enolpyruvyl-6-hydroxy-3-cyclohexene-1-carboxylate synthase.